Consider the following 386-residue polypeptide: Synaptotagmin-5 (386 aa).

Pro residues predominate over residues 1 to 16; it reads MFPEPPTPGPPSPDTP. The tract at residues 1 to 23 is disordered; the sequence is MFPEPPTPGPPSPDTPPDSSRIS. Residues 1-24 are Vesicular-facing; sequence MFPEPPTPGPPSPDTPPDSSRISH. Residues 25–45 form a helical membrane-spanning segment; the sequence is GPVPPWALATIVLVSGLLIFS. Residues 46-386 lie on the Cytoplasmic side of the membrane; it reads CCFCLYRKSC…PDRVRLLPAP (341 aa). C2 domains follow at residues 108–227 and 239–372; these read ELGR…QAWR and KLGD…AQWH. 12 residues coordinate Ca(2+): leucine 138, aspartate 139, aspartate 145, aspartate 197, phenylalanine 198, aspartate 199, serine 202, aspartate 205, aspartate 270, aspartate 276, aspartate 330, and aspartate 332.

Belongs to the synaptotagmin family. Homodimer. Interacts with both alpha- and beta-tubulin. It depends on Ca(2+) as a cofactor.

The protein resides in the cytoplasmic vesicle. It localises to the secretory vesicle. Its subcellular location is the synaptic vesicle membrane. It is found in the recycling endosome membrane. May be involved in Ca(2+)-dependent exocytosis of secretory vesicles through Ca(2+) and phospholipid binding to the C2 domain or may serve as Ca(2+) sensors in the process of vesicular trafficking and exocytosis. Regulates the Ca(2+)-dependent secretion of norepinephrine in PC12 cells. Required for export from the endocytic recycling compartment to the cell surface. The polypeptide is Synaptotagmin-5 (SYT5) (Homo sapiens (Human)).